Here is a 108-residue protein sequence, read N- to C-terminus: ATP synthase peripheral stalk subunit F6, mitochondrial (108 aa).

The N-terminal 32 residues, 1 to 32, are a transit peptide targeting the mitochondrion; the sequence is MILQRLFRLSSAVQSAISVSWRRNIGITAVAF. An N6-acetyllysine mark is found at K41, K46, and K79. N6-acetyllysine; alternate occurs at positions 84 and 99. K84 and K99 each carry N6-succinyllysine; alternate. K105 bears the N6-acetyllysine mark. Residue S108 is modified to Phosphoserine.

This sequence belongs to the eukaryotic ATPase subunit F6 family. Component of the ATP synthase complex composed at least of ATP5F1A/subunit alpha, ATP5F1B/subunit beta, ATP5MC1/subunit c (homooctomer), MT-ATP6/subunit a, MT-ATP8/subunit 8, ATP5ME/subunit e, ATP5MF/subunit f, ATP5MG/subunit g, ATP5MK/subunit k, ATP5MJ/subunit j, ATP5F1C/subunit gamma, ATP5F1D/subunit delta, ATP5F1E/subunit epsilon, ATP5PF/subunit F6, ATP5PB/subunit b, ATP5PD/subunit d, ATP5PO/subunit OSCP. ATP synthase complex consists of a soluble F(1) head domain (subunits alpha(3) and beta(3)) - the catalytic core - and a membrane F(0) domain - the membrane proton channel (subunits c, a, 8, e, f, g, k and j). These two domains are linked by a central stalk (subunits gamma, delta, and epsilon) rotating inside the F1 region and a stationary peripheral stalk (subunits F6, b, d, and OSCP).

The protein resides in the mitochondrion. It localises to the mitochondrion inner membrane. Functionally, subunit F6, of the mitochondrial membrane ATP synthase complex (F(1)F(0) ATP synthase or Complex V) that produces ATP from ADP in the presence of a proton gradient across the membrane which is generated by electron transport complexes of the respiratory chain. ATP synthase complex consist of a soluble F(1) head domain - the catalytic core - and a membrane F(1) domain - the membrane proton channel. These two domains are linked by a central stalk rotating inside the F(1) region and a stationary peripheral stalk. During catalysis, ATP synthesis in the catalytic domain of F(1) is coupled via a rotary mechanism of the central stalk subunits to proton translocation. In vivo, can only synthesize ATP although its ATP hydrolase activity can be activated artificially in vitro. Part of the complex F(0) domain. Part of the complex F(0) domain and the peripheric stalk, which acts as a stator to hold the catalytic alpha(3)beta(3) subcomplex and subunit a/ATP6 static relative to the rotary elements. The protein is ATP synthase peripheral stalk subunit F6, mitochondrial of Bos taurus (Bovine).